Reading from the N-terminus, the 325-residue chain is Glutarate 2-hydroxylase (325 aa).

Fe cation is bound by residues His160, Asp162, and His292.

Belongs to the glutarate hydroxylase family. As to quaternary structure, homotetramer. Fe(2+) serves as cofactor.

It catalyses the reaction glutarate + 2-oxoglutarate + O2 = (S)-2-hydroxyglutarate + succinate + CO2. It functions in the pathway amino-acid degradation. Its function is as follows. Acts as an alpha-ketoglutarate-dependent dioxygenase catalyzing hydroxylation of glutarate (GA) to L-2-hydroxyglutarate (L2HG). Functions in a L-lysine degradation pathway that proceeds via cadaverine, glutarate and L-2-hydroxyglutarate. The polypeptide is Glutarate 2-hydroxylase (Escherichia coli (strain 55989 / EAEC)).